The chain runs to 295 residues: 4-diphosphocytidyl-2-C-methyl-D-erythritol kinase (295 aa).

Lys15 is an active-site residue. An ATP-binding site is contributed by 101–111 (PIAAGLGGGSS). Asp143 is a catalytic residue.

Belongs to the GHMP kinase family. IspE subfamily.

It catalyses the reaction 4-CDP-2-C-methyl-D-erythritol + ATP = 4-CDP-2-C-methyl-D-erythritol 2-phosphate + ADP + H(+). The protein operates within isoprenoid biosynthesis; isopentenyl diphosphate biosynthesis via DXP pathway; isopentenyl diphosphate from 1-deoxy-D-xylulose 5-phosphate: step 3/6. Functionally, catalyzes the phosphorylation of the position 2 hydroxy group of 4-diphosphocytidyl-2C-methyl-D-erythritol. In Caulobacter vibrioides (strain ATCC 19089 / CIP 103742 / CB 15) (Caulobacter crescentus), this protein is 4-diphosphocytidyl-2-C-methyl-D-erythritol kinase.